A 409-amino-acid polypeptide reads, in one-letter code: Dual-specificity RNA methyltransferase RlmN (409 aa).

Catalysis depends on Glu-121, which acts as the Proton acceptor. Positions 127 to 376 constitute a Radical SAM core domain; it reads EEGRGTLCIS…IRTPRGRDIL (250 aa). Cys-134 and Cys-379 are oxidised to a cystine. The [4Fe-4S] cluster site is built by Cys-141, Cys-145, and Cys-148. S-adenosyl-L-methionine is bound by residues 205-206, Ser-237, 259-261, and Asn-336; these read GE and SLH. Cys-379 (S-methylcysteine intermediate) is an active-site residue.

Belongs to the radical SAM superfamily. RlmN family. Requires [4Fe-4S] cluster as cofactor.

The protein localises to the cytoplasm. It catalyses the reaction adenosine(2503) in 23S rRNA + 2 reduced [2Fe-2S]-[ferredoxin] + 2 S-adenosyl-L-methionine = 2-methyladenosine(2503) in 23S rRNA + 5'-deoxyadenosine + L-methionine + 2 oxidized [2Fe-2S]-[ferredoxin] + S-adenosyl-L-homocysteine. The catalysed reaction is adenosine(37) in tRNA + 2 reduced [2Fe-2S]-[ferredoxin] + 2 S-adenosyl-L-methionine = 2-methyladenosine(37) in tRNA + 5'-deoxyadenosine + L-methionine + 2 oxidized [2Fe-2S]-[ferredoxin] + S-adenosyl-L-homocysteine. In terms of biological role, specifically methylates position 2 of adenine 2503 in 23S rRNA and position 2 of adenine 37 in tRNAs. m2A2503 modification seems to play a crucial role in the proofreading step occurring at the peptidyl transferase center and thus would serve to optimize ribosomal fidelity. The protein is Dual-specificity RNA methyltransferase RlmN of Rhizobium etli (strain ATCC 51251 / DSM 11541 / JCM 21823 / NBRC 15573 / CFN 42).